A 239-amino-acid polypeptide reads, in one-letter code: Dihydromethanopterin reductase (acceptor) (239 aa).

2 4Fe-4S ferredoxin-type domains span residues 144–175 (MPYN…EKNG) and 176–205 (VTDQ…GGPV). [4Fe-4S] cluster-binding residues include Cys-153, Cys-156, Cys-159, Cys-165, Cys-185, Cys-188, Cys-191, and Cys-195.

As to quaternary structure, homodimer. [4Fe-4S] cluster is required as a cofactor.

The enzyme catalyses 5,6,7,8-tetrahydromethanopterin + A = 7,8-dihydromethanopterin + AH2. The protein operates within cofactor biosynthesis; 5,6,7,8-tetrahydromethanopterin biosynthesis. In terms of biological role, involved in the biosynthesis of tetrahydromethanopterin, a coenzyme used in methanogenesis. Catalyzes the reduction of dihydromethanopterin (H(2)MPT) to tetrahydromethanopterin (H(4)MPT). Ferredoxin may serve as an electron donor. This is Dihydromethanopterin reductase (acceptor) from Methanosarcina mazei (strain ATCC BAA-159 / DSM 3647 / Goe1 / Go1 / JCM 11833 / OCM 88) (Methanosarcina frisia).